A 554-amino-acid polypeptide reads, in one-letter code: MTSVHTLPDITATPAWDALRKHHDRIGDTHLRQFFEEDPDRGRELTVTVGDLYIDYSKHRVTRETLRLLVDLARTAKLEERRDQMFAGVHINTSEDRAVLHTALRLPRDAELIVDGRNVVADVHEVLDAMGEFTDRLRSGEWTGATGKRISTVVNIGIGGSDLGPVMVYQALRHYADAGISARFVSNVDPADLIATLADLDPATTLFIVASKTFSTLETLTNATAARRWITDALGDAAVAHHFVAVSTNKRLVDDFGINTDNMFGFWDWVGGRYSVDSAIGLSVMAVIGREAFADFLSGFHIVDRHFQTAPLESNAPVLLGLIGLWYSNFMGAQSRAVLPYSNDLARFAAYLQQLTMESNGKSTRADGSPVTTDTGEIFWGEPGTNGQHAFYQLLHQGTRLVPADFIGFSQPIDDLPTAEGSGSMHDLLMSNFFAQTQVLAFGKTAEEIAAEGTPADIVPHKVMPGNRPSTSILANRLTPSVLGQLIALYEHQVFTEGVIWGIDSFDQWGVELGKTQAKALLPVITANNSPAPQSDSSTDALVRRYRSERGRTS.

The Proton donor role is filled by Glu358. Active-site residues include His389 and Lys515. A compositionally biased stretch (polar residues) spans 527-540; the sequence is ANNSPAPQSDSSTD. Residues 527–554 form a disordered region; it reads ANNSPAPQSDSSTDALVRRYRSERGRTS. Basic and acidic residues predominate over residues 542 to 554; it reads LVRRYRSERGRTS.

This sequence belongs to the GPI family.

The protein resides in the cytoplasm. The catalysed reaction is alpha-D-glucose 6-phosphate = beta-D-fructose 6-phosphate. It participates in carbohydrate biosynthesis; gluconeogenesis. The protein operates within carbohydrate degradation; glycolysis; D-glyceraldehyde 3-phosphate and glycerone phosphate from D-glucose: step 2/4. Catalyzes the reversible isomerization of glucose-6-phosphate to fructose-6-phosphate. The polypeptide is Glucose-6-phosphate isomerase (Mycolicibacterium paratuberculosis (strain ATCC BAA-968 / K-10) (Mycobacterium paratuberculosis)).